Reading from the N-terminus, the 471-residue chain is MAPADGESSPPPHVAVVAFPFSSHAAVLLSIARALAAAAAPSGATLSFLSTASSLAQLRKASSASAGHGLPGNLRFVEVPDGAPAAEETVPVPRQMQLFMEAAEAGGVKAWLEAARAAAGGARVTCVVGDAFVWPAADAAASAGAPWVPVWTAASCALLAHIRTDALREDVGDQAANRVDGLLISHPGLASYRVRDLPDGVVSGDFNYVINLLVHRMGQCLPRSAAAVALNTFPGLDPPDVTAALAEILPNCVPFGPYHLLLAEDDADTAAPADPHGCLAWLGRQPARGVAYVSFGTVACPRPDELRELAAGLEDSGAPFLWSLREDSWPHLPPGFLDRAAGTGSGLVVPWAPQVAVLRHPSVGAFVTHAGWASVLEGLSSGVPMACRPFFGDQRMNARSVAHVWGFGAAFEGAMTSAGVATAVEELLRGEEGARMRARAKELQALVAEAFGPGGECRKNFDRFVEIVCRA.

Histidine 24 serves as the catalytic Proton acceptor. An anthocyanidin is bound at residue histidine 24. Aspartate 130 serves as the catalytic Charge relay. Threonine 152 serves as a coordination point for UDP-alpha-D-glucose. Histidine 161 lines the an anthocyanidin pocket. Residues alanine 352, glutamine 354, histidine 369, tryptophan 372, serine 374, and glutamate 377 each contribute to the UDP-alpha-D-glucose site. Glycine 392 serves as a coordination point for an anthocyanidin. UDP-alpha-D-glucose contacts are provided by aspartate 393 and glutamine 394.

This sequence belongs to the UDP-glycosyltransferase family.

The enzyme catalyses an anthocyanidin + UDP-alpha-D-glucose + H(+) = an anthocyanidin 3-O-beta-D-glucoside + UDP. The protein operates within pigment biosynthesis; anthocyanin biosynthesis. In the presence of other necessary color factors, this glycosylation reaction allows the accumulation of anthocyanin pigments. The sequence is that of Anthocyanidin 3-O-glucosyltransferase (BZ1) from Zea mays (Maize).